Consider the following 146-residue polypeptide: Large ribosomal subunit protein uL15 (146 aa).

The segment covering 1-13 has biased composition (basic and acidic residues); that stretch reads MKLHELKPAEGSR. Positions 1 to 51 are disordered; that stretch reads MKLHELKPAEGSRKVRNRVGRGIGSGNGKTAGKGHKGQNARSGGGVRLGFE. Gly residues-rich tracts occupy residues 21–31 and 42–51; these read RGIGSGNGKTA and SGGGVRLGFE.

Belongs to the universal ribosomal protein uL15 family. Part of the 50S ribosomal subunit.

Functionally, binds to the 23S rRNA. In Bacillus cereus (strain G9842), this protein is Large ribosomal subunit protein uL15.